The primary structure comprises 275 residues: Rhamnulose-1-phosphate aldolase (275 aa).

Glu117 is a catalytic residue. Zn(2+)-binding residues include His141, His143, and His212.

The protein belongs to the aldolase class II family. RhaD subfamily. As to quaternary structure, homotetramer. It depends on Zn(2+) as a cofactor.

The protein resides in the cytoplasm. It carries out the reaction L-rhamnulose 1-phosphate = (S)-lactaldehyde + dihydroxyacetone phosphate. Its pathway is carbohydrate degradation; L-rhamnose degradation; glycerone phosphate from L-rhamnose: step 3/3. Catalyzes the reversible cleavage of L-rhamnulose-1-phosphate to dihydroxyacetone phosphate (DHAP) and L-lactaldehyde. The polypeptide is Rhamnulose-1-phosphate aldolase (Salmonella paratyphi B (strain ATCC BAA-1250 / SPB7)).